The sequence spans 131 residues: Holo-[acyl-carrier-protein] synthase (131 aa).

Positions 8 and 63 each coordinate Mg(2+).

Belongs to the P-Pant transferase superfamily. AcpS family. The cofactor is Mg(2+).

It localises to the cytoplasm. It catalyses the reaction apo-[ACP] + CoA = holo-[ACP] + adenosine 3',5'-bisphosphate + H(+). Functionally, transfers the 4'-phosphopantetheine moiety from coenzyme A to a Ser of acyl-carrier-protein. This chain is Holo-[acyl-carrier-protein] synthase, found in Shewanella piezotolerans (strain WP3 / JCM 13877).